The following is a 213-amino-acid chain: High frequency lysogenization protein HflD homolog (213 aa).

Positions 79-126 (QGLNAELTRYTLSLMVLERKLSSAKGALDTLGNRINGLQRQLEHFDLQ) form a coiled coil.

The protein belongs to the HflD family.

The protein resides in the cytoplasm. It localises to the cell inner membrane. This Shigella boydii serotype 18 (strain CDC 3083-94 / BS512) protein is High frequency lysogenization protein HflD homolog.